A 907-amino-acid polypeptide reads, in one-letter code: Glutamate receptor 1 (907 aa).

A signal peptide spans 1–18 (MPYIFAFFCTGFLGAVVG). The Extracellular portion of the chain corresponds to 19–536 (ANFPNNIQIG…GVFSFLDPLA (518 aa)). N-linked (GlcNAc...) asparagine glycans are attached at residues asparagine 63, asparagine 249, asparagine 257, asparagine 363, asparagine 401, and asparagine 406. Cysteines 75 and 323 form a disulfide. L-glutamate contacts are provided by proline 492, threonine 494, and arginine 499. A helical transmembrane segment spans residues 537–557 (YEIWMCIVFAYIGVSVVLFLV). Residues 558–584 (SRFSPYEWHSEEFEEGRDQTTSDQSNE) lie on the Cytoplasmic side of the membrane. The helical; Pore-forming intramembrane region spans 585 to 600 (FGIFNSLWFSLGAFMQ). An intramembrane segment occupies 601-603 (QGC). The S-palmitoyl cysteine moiety is linked to residue cysteine 603. Residues 604-609 (DISPRS) are Cytoplasmic-facing. A helical membrane pass occupies residues 610-630 (LSGRIVGGVWWFFTLIIISSY). Over 631-805 (TANLAAFLTV…DKTSALSLSN (175 aa)) the chain is Extracellular. Serine 645 bears the Phosphoserine mark. Positions 668 and 669 each coordinate L-glutamate. Residue serine 710 is modified to Phosphoserine; by PKC. Residue glutamate 719 participates in L-glutamate binding. Cysteine 732 and cysteine 787 are oxidised to a cystine. The helical transmembrane segment at 806–826 (VAGVFYILIGGLGLAMLVALI) threads the bilayer. Residues 827 to 907 (EFCYKSRSES…SGMPLGATGL (81 aa)) are Cytoplasmic-facing. Cysteine 829 is lipidated: S-palmitoyl cysteine. Phosphoserine; by PKC, PKA and CAMK2 is present on serine 849. The tract at residues 857-881 (STLPRNSGAGASGGGGSGENGRVVS) is disordered. A Phosphoserine; by PKC, PKA and PKG/PRKG2 modification is found at serine 863. The span at 866–875 (GASGGGGSGE) shows a compositional bias: gly residues. The short motif at 904–907 (ATGL) is the PDZ-binding element.

It belongs to the glutamate-gated ion channel (TC 1.A.10.1) family. GRIA1 subfamily. As to quaternary structure, homotetramer or heterotetramer of pore-forming glutamate receptor subunits; heteromeric assembly can be the result of both receptor subtype and flip-flop forms and according the composition, one partner can be dominant with respect to the fast desensitizing current component, whereas the other can determine the steady-state component. Tetramers may be formed by the dimerization of dimers. Found in a complex with GRIA2, GRIA3, GRIA4, CNIH2, CNIH3, CACNG2, CACNG3, CACNG4, CACNG5, CACNG7 and CACNG8. Interacts with HIP1 and RASGRF2. Interacts with SYNDIG1 and GRIA2. Interacts with DLG1 (via C-terminus). Interacts with LRFN1. Interacts with PRKG2. Interacts with CNIH2 and CACNG2. Interacts with CACNG5; this interaction modulates the gating. Interacts (via C-terminus) with PDLIM4 (via LIM domain); this interaction as well as the interaction of PDLIM4 with alpha-actinin is required for their colocalization in early endosomes. Interacts with SNX27 (via PDZ domain); the interaction is required for recycling to the plasma membrane when endocytosed and prevent degradation in lysosomes. Interacts (via PDZ-binding motif) with SHANK3 (via PDZ domain). Interacts with CACNG3; associates GRIA1 with the adapter protein complex 4 (AP-4) to target GRIA1 to the somatodendritic compartment of neurons. Interacts with CACNG2; this interaction mediates traffick to the plasma membrane and modulation of desensitization. Interaction with CNIH2 and CNIH3; this interaction promotes expression at the plasma membrane and extensively modulates their gating properties by slowing deactivation and desensitization kinetics. Found in a complex with GRIA2, GRIA3, GRIA4, DLG4, CACNG8 and CNIH2. Phosphorylated at Ser-645. Phosphorylated at Ser-710 by PKC. Phosphorylated at Ser-849 by PKC, PKA and CAMK2. Phosphorylated at Ser-863 by PKC, PKA and PRKG2. Phosphorylation of Ser-863 is reduced by induction of long-term depression and increased by induction of long-term potentiation. Post-translationally, palmitoylated. Depalmitoylated by CPT1C and upon L-glutamate stimulation. ZDHHC3/GODZ specifically palmitoylates Cys-603, which leads to Golgi retention and decreased cell surface expression. In contrast, Cys-829 palmitoylation does not affect cell surface expression but regulates stimulation-dependent endocytosis. As to expression, detected in cerebellum (at protein level).

The protein resides in the cell membrane. It localises to the endoplasmic reticulum membrane. It is found in the postsynaptic cell membrane. The protein localises to the postsynaptic density membrane. Its subcellular location is the cell projection. The protein resides in the dendrite. It localises to the dendritic spine. It is found in the early endosome membrane. The protein localises to the recycling endosome membrane. Its subcellular location is the presynapse. The protein resides in the synapse. It carries out the reaction Ca(2+)(in) = Ca(2+)(out). It catalyses the reaction Na(+)(in) = Na(+)(out). The catalysed reaction is Mg(2+)(in) = Mg(2+)(out). The enzyme catalyses Li(+)(in) = Li(+)(out). It carries out the reaction K(+)(in) = K(+)(out). It catalyses the reaction Sr(2+)(in) = Sr(2+)(out). Glutamate-gated receptor activity inhibited by DNQX (6,7-dinitroquinoxaline-2,3-dione). In terms of biological role, ionotropic glutamate receptor that functions as a ligand-gated cation channel, gated by L-glutamate and glutamatergic agonists such as alpha-amino-3-hydroxy-5-methyl-4-isoxazolepropionic acid (AMPA), quisqualic acid, and kainic acid. L-glutamate acts as an excitatory neurotransmitter at many synapses in the central nervous system. Binding of the excitatory neurotransmitter L-glutamate induces a conformation change, leading to the opening of the cation channel, and thereby converts the chemical signal to an electrical impulse upon entry of monovalent and divalent cations such as sodium and calcium. The receptor then desensitizes rapidly and enters in a transient inactive state, characterized by the presence of bound agonist. In the presence of CACNG2 or CACNG4 or CACNG7 or CACNG8, shows resensitization which is characterized by a delayed accumulation of current flux upon continued application of L-glutamate. Resensitization is blocked by CNIH2 through interaction with CACNG8 in the CACNG8-containing AMPA receptors complex. Calcium (Ca(2+)) permeability depends on subunits composition and, heteromeric channels containing edited GRIA2 subunit are calcium-impermeable. Also permeable to other divalents cations such as strontium(2+) and magnesium(2+) and monovalent cations such as potassium(1+) and lithium(1+). The sequence is that of Glutamate receptor 1 from Rattus norvegicus (Rat).